The primary structure comprises 450 residues: tRNA-2-methylthio-N(6)-dimethylallyladenosine synthase (450 aa).

An MTTase N-terminal domain is found at 8 to 124; the sequence is RTLHITTWGC…LPELIAEIEA (117 aa). The [4Fe-4S] cluster site is built by Cys17, Cys52, Cys87, Cys162, Cys166, and Cys169. The region spanning 148–380 is the Radical SAM core domain; that stretch reads ASQGPIAFLA…QAVLRDQQHA (233 aa). In terms of domain architecture, TRAM spans 383–445; the sequence is RAQVGRSFEV…PNSLMASLTQ (63 aa).

Belongs to the methylthiotransferase family. MiaB subfamily. As to quaternary structure, monomer. It depends on [4Fe-4S] cluster as a cofactor.

Its subcellular location is the cytoplasm. It carries out the reaction N(6)-dimethylallyladenosine(37) in tRNA + (sulfur carrier)-SH + AH2 + 2 S-adenosyl-L-methionine = 2-methylsulfanyl-N(6)-dimethylallyladenosine(37) in tRNA + (sulfur carrier)-H + 5'-deoxyadenosine + L-methionine + A + S-adenosyl-L-homocysteine + 2 H(+). Functionally, catalyzes the methylthiolation of N6-(dimethylallyl)adenosine (i(6)A), leading to the formation of 2-methylthio-N6-(dimethylallyl)adenosine (ms(2)i(6)A) at position 37 in tRNAs that read codons beginning with uridine. This chain is tRNA-2-methylthio-N(6)-dimethylallyladenosine synthase, found in Acidiphilium cryptum (strain JF-5).